Reading from the N-terminus, the 304-residue chain is DCN1-like protein 3 (304 aa).

Disordered regions lie at residues 1–87 (MGQC…EESS) and 284–304 (EGEG…EEQT). G2 carries the N-myristoyl glycine lipid modification. The DCUN1 domain occupies 86 to 278 (SSLQRLEELF…LFDTFVEWEM (193 aa)).

As to quaternary structure, part of a complex containing DCUN1D3, CUL3 and RBX1. Interacts (via the DCUN1 domain) with the unneddylated cullins: interacts with CUL1, CUL2, CUL3, CUL4A, CUL4B and CUL5; these interactions promote the cullin neddylation and the identity of the cullin dictates the affinity of the interaction. Interacts preferentially with CUL3; this interaction triggers the relocalization of CUL3 to the cell membrane where CUL3 is neddylated. Interacts (via DCUN1 domain) with RBX1. May also interact with regulators or subunits of cullin-RING ligases such as RNF7, ELOB and DDB1; these interactions are bridged by cullins. Interacts (via DCUN1 domain) with CAND1; this interaction is bridged by cullins and strongly inhibits cullin neddylation. These CAND-cullin-DCNL complexes can only be neddylated in the presence of a substrate adapter. Interacts (via DCUN1 domain) with the N-terminally acetylated form of UBE2M and UBE2F.

It localises to the cell membrane. It is found in the cytoplasm. The protein localises to the nucleus. Its subcellular location is the perinuclear region. Functionally, contributes to the neddylation of all cullins by transferring NEDD8 from N-terminally acetylated NEDD8-conjugating E2s enzyme to different cullin C-terminal domain-RBX complexes and may play a role in the cell cycle progression by regulating the SCF ubiquitin E3 ligase complex, after UV damage. At the cell membrane, can promote and as well inhibit cullins neddylation. The polypeptide is DCN1-like protein 3 (Bos taurus (Bovine)).